The chain runs to 1287 residues: DNA-directed RNA polymerase 147 kDa polypeptide (1287 aa).

Belongs to the poxviridae DNA-directed RNA polymerase 147 kDa subunit family. As to quaternary structure, the DNA-dependent RNA polymerase used for intermediate and late genes expression consists of eight subunits Rpo30/OPG66, Rpo7/OPG90, Rpo22/OPG103, Rpo147/OPG105, Rpo18/OPG119, Rpo19/OPG131, Rpo132/OPG151 and Rpo35/OPG156. The same holoenzyme, with the addition of the transcription-specificity factor OPG109, is used for early gene expression.

The protein resides in the virion. It catalyses the reaction RNA(n) + a ribonucleoside 5'-triphosphate = RNA(n+1) + diphosphate. Part of the DNA-dependent RNA polymerase which catalyzes the transcription of viral DNA into RNA using the four ribonucleoside triphosphates as substrates. Responsible for the transcription of early, intermediate and late genes. DNA-dependent RNA polymerase associates with the early transcription factor (ETF), itself composed of OPG118 and OPG133, thereby allowing the early genes transcription. Late transcription, and probably also intermediate transcription, require newly synthesized RNA polymerase. This Fowlpox virus (strain NVSL) (FPV) protein is DNA-directed RNA polymerase 147 kDa polypeptide (OPG105).